Here is a 395-residue protein sequence, read N- to C-terminus: Protein BTN1 (395 aa).

Residues 1 to 31 (MQLEPAHLVYAAFWTFGLVNNVLYVVILTAA) form the signal peptide. 10 helical membrane-spanning segments follow: residues 43–63 (VVLL…PFFI), 74–94 (LLVG…PLFL), 96–116 (LVGV…FLQL), 134–154 (GAGL…GVSV), 158–178 (LLVF…LLPP), 222–242 (PLVM…YTIN), 261–278 (FRDV…GVFI), 291–311 (IMIP…QSMS), 313–333 (ILPN…LGGA), and 355–375 (LGSV…VSLW).

This sequence belongs to the battenin family.

It localises to the vacuole membrane. Functionally, involved in vacuolar transport and vacuole pH homeostasis. Also required for cytokinesis. The chain is Protein BTN1 (BTN1) from Yarrowia lipolytica (strain CLIB 122 / E 150) (Yeast).